The primary structure comprises 366 residues: cAMP-dependent protein kinase regulatory subunit (366 aa).

The interval methionine 1–leucine 121 is dimerization and phosphorylation. The tract at residues glutamine 55–serine 87 is disordered. The Pseudophosphorylation motif signature appears at arginine 82–isoleucine 86. Position 87 is a phosphoserine (serine 87). 3',5'-cyclic AMP contacts are provided by residues leucine 122–glutamine 239, glutamate 187, arginine 196, isoleucine 240–threonine 366, glutamate 311, and arginine 320.

Belongs to the cAMP-dependent kinase regulatory chain family. In terms of assembly, tetramer, composed of 2 regulatory (R) and 2 catalytic (C) subunits. In the presence of cAMP it dissociates into 2 active monomeric C subunits and an R dimer that binds four cAMP molecules. In terms of processing, the pseudophosphorylation site binds to the substrate-binding region of the catalytic chain but is not phosphorylated. The physiological significance of phosphorylations by other kinases is unclear.

It is found in the cytoplasm. Its subcellular location is the cytosol. In terms of biological role, controls the rhythmic contraction of enteric muscles probably by regulating G-protein coupled receptor aex-2-mediated calcium influx in GABAergic DVB neurons. The chain is cAMP-dependent protein kinase regulatory subunit (kin-2) from Caenorhabditis elegans.